The sequence spans 331 residues: Ketol-acid reductoisomerase (NADP(+)) (331 aa).

Residues 2 to 182 (AKVYYDEDAN…GGTKGGVLET (181 aa)) form the KARI N-terminal Rossmann domain. NADP(+) is bound by residues 25-28 (YGSQ), S51, S53, and 83-86 (DEKQ). H108 is an active-site residue. G134 provides a ligand contact to NADP(+). One can recognise a KARI C-terminal knotted domain in the interval 183–328 (TFKDETETDL…VELRAMMPWL (146 aa)). Residues D191, E195, E227, and E231 each coordinate Mg(2+). Residue S252 coordinates substrate.

It belongs to the ketol-acid reductoisomerase family. It depends on Mg(2+) as a cofactor.

It carries out the reaction (2R)-2,3-dihydroxy-3-methylbutanoate + NADP(+) = (2S)-2-acetolactate + NADPH + H(+). The enzyme catalyses (2R,3R)-2,3-dihydroxy-3-methylpentanoate + NADP(+) = (S)-2-ethyl-2-hydroxy-3-oxobutanoate + NADPH + H(+). It participates in amino-acid biosynthesis; L-isoleucine biosynthesis; L-isoleucine from 2-oxobutanoate: step 2/4. The protein operates within amino-acid biosynthesis; L-valine biosynthesis; L-valine from pyruvate: step 2/4. Involved in the biosynthesis of branched-chain amino acids (BCAA). Catalyzes an alkyl-migration followed by a ketol-acid reduction of (S)-2-acetolactate (S2AL) to yield (R)-2,3-dihydroxy-isovalerate. In the isomerase reaction, S2AL is rearranged via a Mg-dependent methyl migration to produce 3-hydroxy-3-methyl-2-ketobutyrate (HMKB). In the reductase reaction, this 2-ketoacid undergoes a metal-dependent reduction by NADPH to yield (R)-2,3-dihydroxy-isovalerate. The polypeptide is Ketol-acid reductoisomerase (NADP(+)) (Clostridium novyi (strain NT)).